Reading from the N-terminus, the 100-residue chain is Urease subunit gamma (100 aa).

The protein belongs to the urease gamma subunit family. As to quaternary structure, heterotrimer of UreA (gamma), UreB (beta) and UreC (alpha) subunits. Three heterotrimers associate to form the active enzyme.

It is found in the cytoplasm. The catalysed reaction is urea + 2 H2O + H(+) = hydrogencarbonate + 2 NH4(+). Its pathway is nitrogen metabolism; urea degradation; CO(2) and NH(3) from urea (urease route): step 1/1. This chain is Urease subunit gamma, found in Pseudomonas aeruginosa (strain LESB58).